The primary structure comprises 242 residues: Small ribosomal subunit protein uS2 (242 aa).

This sequence belongs to the universal ribosomal protein uS2 family.

The sequence is that of Small ribosomal subunit protein uS2 from Photobacterium profundum (strain SS9).